The chain runs to 639 residues: 3-oxocholoyl-CoA 4-desaturase (639 aa).

Gln101 contacts FMN. 155–158 (HAAH) lines the substrate pocket. The Proton donor role is filled by Tyr160. FMN is bound by residues Arg208, Arg286, and 308 to 309 (GR). [4Fe-4S] cluster contacts are provided by Cys332 and Cys335. Residue Gln337 participates in FAD binding. [4Fe-4S] cluster-binding residues include Cys339 and Cys353. The FAD site is built by Ala383, Glu402, Gln410, Lys420, and Val447.

In the N-terminal section; belongs to the NADH:flavin oxidoreductase/NADH oxidase family. FMN serves as cofactor. FAD is required as a cofactor. The cofactor is [4Fe-4S] cluster.

The enzyme catalyses 7alpha,12alpha-dihydroxy-3-oxochol-24-oyl-CoA + NAD(+) = 7alpha,12alpha-dihydroxy-3-oxochol-4-en-24-oyl-CoA + NADH + H(+). It carries out the reaction 7alpha-hydroxy-3-oxochol-24-oyl-CoA + NAD(+) = 7alpha-hydroxy-3-oxochol-4-en-24-oyl-CoA + NADH + H(+). The protein operates within lipid metabolism; bile acid degradation. In terms of biological role, stereo-specific NAD(H)-dependent 3-oxo-delta4-cholenoic acid oxidoreductase involved in bile acid 7alpha-dehydroxylation. In Clostridium scindens (strain JCM 10418 / VPI 12708), this protein is 3-oxocholoyl-CoA 4-desaturase.